A 619-amino-acid polypeptide reads, in one-letter code: ATP-dependent zinc metalloprotease FtsH (619 aa).

Topologically, residues 1 to 11 (MDKQSKFRIKT) are cytoplasmic. Residues 12–32 (FFKKIIFFLIIFCFFYFFNFI) traverse the membrane as a helical segment. The Periplasmic portion of the chain corresponds to 33–131 (KKTKKITHTT…FKNYKIYTVL (99 aa)). Residues 132–152 (NFFYDYGFFLMIIIICWIFIF) traverse the membrane as a helical segment. The Cytoplasmic segment spans residues 153-619 (RKIASRSSES…FKEDFASILD (467 aa)). 224-231 (GPPGTGKT) is an ATP binding site. H447 lines the Zn(2+) pocket. E448 is an active-site residue. 2 residues coordinate Zn(2+): H451 and D522.

In the central section; belongs to the AAA ATPase family. The protein in the C-terminal section; belongs to the peptidase M41 family. Homohexamer. It depends on Zn(2+) as a cofactor.

The protein localises to the cell inner membrane. In terms of biological role, acts as a processive, ATP-dependent zinc metallopeptidase for both cytoplasmic and membrane proteins. Plays a role in the quality control of integral membrane proteins. This is ATP-dependent zinc metalloprotease FtsH from Karelsulcia muelleri (strain DMIN) (Sulcia muelleri).